A 105-amino-acid polypeptide reads, in one-letter code: Met repressor (105 aa).

The protein belongs to the MetJ family. Homodimer.

The protein resides in the cytoplasm. Functionally, this regulatory protein, when combined with SAM (S-adenosylmethionine) represses the expression of the methionine regulon and of enzymes involved in SAM synthesis. The protein is Met repressor of Hamiltonella defensa subsp. Acyrthosiphon pisum (strain 5AT).